The following is a 312-amino-acid chain: Olfactory receptor 4F3/4F16/4F29 (312 aa).

At 1-25 (MDGENHSVVSEFLFLGLTHSWEIQL) the chain is on the extracellular side. A glycan (N-linked (GlcNAc...) asparagine) is linked at Asn-5. A helical membrane pass occupies residues 26 to 49 (LLLVFSSVLYVASITGNILIVFSV). Over 50–57 (TTDPHLHS) the chain is Cytoplasmic. Residues 58-79 (PMYFLLASLSFIDLGACSVTSP) form a helical membrane-spanning segment. Over 80–100 (KMIYDLFRKRKVISFGGCIAQ) the chain is Extracellular. Cysteines 97 and 189 form a disulfide. Residues 101–120 (IFFIHVVGGVEMVLLIAMAF) form a helical membrane-spanning segment. Topologically, residues 121-139 (DRYVALCKPLHYLTIMSPR) are cytoplasmic. The helical transmembrane segment at 140-158 (MCLSFLAVAWTLGVSHSLF) threads the bilayer. At 159–195 (QLAFLVNLAFCGPNVLDSFYCDLPRLLRLACTDTYRL) the chain is on the extracellular side. Residues 196 to 219 (QFMVTVNSGFICVGTFFILLISYV) form a helical membrane-spanning segment. The Cytoplasmic portion of the chain corresponds to 220-235 (FILFTVWKHSSGGSSK). The helical transmembrane segment at 236–258 (ALSTLSAHSTVVLLFFGPPMFVY) threads the bilayer. The Extracellular portion of the chain corresponds to 259–269 (TRPHPNSQMDK). A helical membrane pass occupies residues 270 to 289 (FLAIFDAVLTPFLNPVVYTF). Over 290–312 (RNKEMKAAIKRVCKQLVIYKRIS) the chain is Cytoplasmic.

This sequence belongs to the G-protein coupled receptor 1 family.

Its subcellular location is the cell membrane. Its function is as follows. Odorant receptor. The sequence is that of Olfactory receptor 4F3/4F16/4F29 (OR4F3) from Homo sapiens (Human).